Consider the following 250-residue polypeptide: 2,3-bisphosphoglycerate-dependent phosphoglycerate mutase (250 aa).

Residues 10-17 (RHGESQWN), 23-24 (TG), Arg62, 89-92 (ERHY), Lys100, 116-117 (RR), and 185-186 (GN) contribute to the substrate site. Residue His11 is the Tele-phosphohistidine intermediate of the active site. Residue Glu89 is the Proton donor/acceptor of the active site.

This sequence belongs to the phosphoglycerate mutase family. BPG-dependent PGAM subfamily. Homodimer.

It carries out the reaction (2R)-2-phosphoglycerate = (2R)-3-phosphoglycerate. It participates in carbohydrate degradation; glycolysis; pyruvate from D-glyceraldehyde 3-phosphate: step 3/5. Catalyzes the interconversion of 2-phosphoglycerate and 3-phosphoglycerate. This is 2,3-bisphosphoglycerate-dependent phosphoglycerate mutase from Salmonella choleraesuis (strain SC-B67).